A 280-amino-acid polypeptide reads, in one-letter code: Bis(5'-nucleosyl)-tetraphosphatase, symmetrical (280 aa).

The protein belongs to the Ap4A hydrolase family.

It catalyses the reaction P(1),P(4)-bis(5'-adenosyl) tetraphosphate + H2O = 2 ADP + 2 H(+). In terms of biological role, hydrolyzes diadenosine 5',5'''-P1,P4-tetraphosphate to yield ADP. This chain is Bis(5'-nucleosyl)-tetraphosphatase, symmetrical, found in Shigella boydii serotype 18 (strain CDC 3083-94 / BS512).